A 347-amino-acid chain; its full sequence is MNPMIFIILLGTIMLGTSIVMTSSHWFLTWLGFEMNMMAVIPVLMKKYSPRSMEAATKYFLTQATASMILMLAIIINLMFSGQWTITNMDNFTASMLLTTALVMKLGLAPFHFWVPEVTQGVSLNSGLILLTWQKIAPLSLLYQIYPSINTNLLLIMSLLSIMIGGWGGLNQTQLRKIMAYSSIAHMGWMMAIMIYNPNLSLLNLFIYILMTSSMFMLLIFASTTSMLSLSLTWNKTPIITIMSLMVLLSLGGLPPLTGFMPKWMIIQELTKNNSVILPTLMAILALLNLFFYMRLTYSSALTMFPTMNNTKLTWQYQNTNILPMMMPLITMSTLALPLTPLFILLN.

A run of 11 helical transmembrane segments spans residues M1–M21, H25–M45, F60–F80, M96–P116, G127–P147, I149–G169, I178–P198, L202–A222, I239–G259, N274–M294, and M326–L346.

It belongs to the complex I subunit 2 family. Core subunit of respiratory chain NADH dehydrogenase (Complex I) which is composed of 45 different subunits. Interacts with TMEM242.

The protein localises to the mitochondrion inner membrane. It catalyses the reaction a ubiquinone + NADH + 5 H(+)(in) = a ubiquinol + NAD(+) + 4 H(+)(out). Functionally, core subunit of the mitochondrial membrane respiratory chain NADH dehydrogenase (Complex I) that is believed to belong to the minimal assembly required for catalysis. Complex I functions in the transfer of electrons from NADH to the respiratory chain. The immediate electron acceptor for the enzyme is believed to be ubiquinone. The sequence is that of NADH-ubiquinone oxidoreductase chain 2 from Suncus etruscus (Etruscan shrew).